The following is a 325-amino-acid chain: Geranylgeranyl transferase type-2 subunit beta (325 aa).

6 PFTB repeats span residues 9–50 (KEKH…CVLD), 57–99 (KEEV…ATYD), 109–150 (KVRL…SILG), 157–198 (VDPA…AIAN), 208–249 (LEEI…AIIG), and 256–298 (YEKL…SLMG). Residues 183-185 (HAA) and 228-240 (RPSK…YSWW) each bind geranylgeranyl diphosphate. Zn(2+) contacts are provided by Asp234, Cys236, and His286.

The protein belongs to the protein prenyltransferase subunit beta family. As to quaternary structure, heterodimer of an alpha and a beta subunit. The cofactor is Zn(2+).

It catalyses the reaction geranylgeranyl diphosphate + L-cysteinyl-[protein] = S-geranylgeranyl-L-cysteinyl-[protein] + diphosphate. Its function is as follows. Catalyzes the transfer of a geranyl-geranyl moiety from geranyl-geranyl pyrophosphate to proteins having the C-terminal -XCC or -XCXC, where both cysteines may become modified. Acts on YPT1 and SEC4. The chain is Geranylgeranyl transferase type-2 subunit beta (BET2) from Saccharomyces cerevisiae (strain ATCC 204508 / S288c) (Baker's yeast).